We begin with the raw amino-acid sequence, 362 residues long: Phosphoserine aminotransferase (362 aa).

Arginine 43 contributes to the L-glutamate binding site. Residues 77–78 (AR), tryptophan 103, threonine 153, aspartate 173, and glutamine 196 contribute to the pyridoxal 5'-phosphate site. Lysine 197 carries the N6-(pyridoxal phosphate)lysine modification.

Belongs to the class-V pyridoxal-phosphate-dependent aminotransferase family. SerC subfamily. Homodimer. The cofactor is pyridoxal 5'-phosphate.

The protein localises to the cytoplasm. The enzyme catalyses O-phospho-L-serine + 2-oxoglutarate = 3-phosphooxypyruvate + L-glutamate. It carries out the reaction 4-(phosphooxy)-L-threonine + 2-oxoglutarate = (R)-3-hydroxy-2-oxo-4-phosphooxybutanoate + L-glutamate. Its pathway is amino-acid biosynthesis; L-serine biosynthesis; L-serine from 3-phospho-D-glycerate: step 2/3. It functions in the pathway cofactor biosynthesis; pyridoxine 5'-phosphate biosynthesis; pyridoxine 5'-phosphate from D-erythrose 4-phosphate: step 3/5. Catalyzes the reversible conversion of 3-phosphohydroxypyruvate to phosphoserine and of 3-hydroxy-2-oxo-4-phosphonooxybutanoate to phosphohydroxythreonine. This chain is Phosphoserine aminotransferase, found in Legionella pneumophila (strain Paris).